Consider the following 124-residue polypeptide: Small ribosomal subunit protein uS12 (124 aa).

The interval 1-32 (MPTINQLVRKGRRDKTAKVKTAALKGSPQRRG) is disordered. The residue at position 89 (D89) is a 3-methylthioaspartic acid. The disordered stretch occupies residues 104–124 (TQGVKGRKQARSRYGAKKEKS). Residues 108–118 (KGRKQARSRYG) show a composition bias toward basic residues.

The protein belongs to the universal ribosomal protein uS12 family. In terms of assembly, part of the 30S ribosomal subunit. Contacts proteins S8 and S17. May interact with IF1 in the 30S initiation complex.

With S4 and S5 plays an important role in translational accuracy. Its function is as follows. Interacts with and stabilizes bases of the 16S rRNA that are involved in tRNA selection in the A site and with the mRNA backbone. Located at the interface of the 30S and 50S subunits, it traverses the body of the 30S subunit contacting proteins on the other side and probably holding the rRNA structure together. The combined cluster of proteins S8, S12 and S17 appears to hold together the shoulder and platform of the 30S subunit. The protein is Small ribosomal subunit protein uS12 of Rhodococcus jostii (strain RHA1).